The primary structure comprises 475 residues: Aspartyl/glutamyl-tRNA(Asn/Gln) amidotransferase subunit B (475 aa).

It belongs to the GatB/GatE family. GatB subfamily. Heterotrimer of A, B and C subunits.

The enzyme catalyses L-glutamyl-tRNA(Gln) + L-glutamine + ATP + H2O = L-glutaminyl-tRNA(Gln) + L-glutamate + ADP + phosphate + H(+). It catalyses the reaction L-aspartyl-tRNA(Asn) + L-glutamine + ATP + H2O = L-asparaginyl-tRNA(Asn) + L-glutamate + ADP + phosphate + 2 H(+). Allows the formation of correctly charged Asn-tRNA(Asn) or Gln-tRNA(Gln) through the transamidation of misacylated Asp-tRNA(Asn) or Glu-tRNA(Gln) in organisms which lack either or both of asparaginyl-tRNA or glutaminyl-tRNA synthetases. The reaction takes place in the presence of glutamine and ATP through an activated phospho-Asp-tRNA(Asn) or phospho-Glu-tRNA(Gln). This is Aspartyl/glutamyl-tRNA(Asn/Gln) amidotransferase subunit B from Thiobacillus denitrificans (strain ATCC 25259 / T1).